The chain runs to 541 residues: Protein wntless homolog (541 aa).

The Cytoplasmic portion of the chain corresponds to 1 to 15 (MAGAIIENMGTKKLC). The helical transmembrane segment at 16–36 (IVGGILLVFQIIAFLVGGLIA) threads the bilayer. The Lumenal segment spans residues 37-232 (PGPTTAVSYM…GIHQNGGFTK (196 aa)). An interaction with Wnt proteins region spans residues 101 to 232 (MEMSPWFQFM…GIHQNGGFTK (132 aa)). The chain crosses the membrane as a helical span at residues 233 to 253 (VWFAMKTFLTPSIFIIMVWYW). The Cytoplasmic segment spans residues 254-268 (RRITMMSRPPVLLEK). Residues 269–289 (VIFALGISMTFINIPVEWFSI) form a helical membrane-spanning segment. The Lumenal segment spans residues 290–303 (GFDWTWMLLFGDIR). A helical membrane pass occupies residues 304–324 (QGIFYAMLLSFWIIFCGEHMM). Topologically, residues 325-331 (DQHERNH) are cytoplasmic. Residues 332 to 352 (IAGYWKQVGPIAVGSFCLFIF) form a helical membrane-spanning segment. Over 353–380 (DMCERGVQLTNPFYSIWTTDIGTELAMA) the chain is Lumenal. Residues 381–401 (FIIVAGICLCLYFLFLCFMVF) traverse the membrane as a helical segment. Residues 402–431 (QVFRNISGKQSSLPAMSKVRRLHYEGLIFR) are Cytoplasmic-facing. The helical transmembrane segment at 432–452 (FKFLMLITLACAAMTVIFFIV) threads the bilayer. At 453 to 471 (SQVTEGHWKWGGVTVQVNS) the chain is on the lumenal side. Residues 472–492 (AFFTGIYGMWNLYVFALMFLY) form a helical membrane-spanning segment. Residues 493–541 (APSHKNYGEDQSNGDLGVHSGEELQLTTTITHVDGPTEIYKLTRKEAQE) lie on the Cytoplasmic side of the membrane.

Belongs to the wntless family. As to quaternary structure, interacts with WNT3A. Interacts with WNT1, WNT3 and WNT5A.

Its subcellular location is the golgi apparatus membrane. The protein localises to the cytoplasmic vesicle membrane. It is found in the cell membrane. The protein resides in the endoplasmic reticulum membrane. It localises to the early endosome membrane. Its function is as follows. Regulates Wnt proteins sorting and secretion in a feedback regulatory mechanism. This reciprocal interaction plays a key role in the regulation of expression, subcellular location, binding and organelle-specific association of Wnt proteins. Also plays an important role in establishment of the anterior-posterior body axis formation during development. This is Protein wntless homolog (WLS) from Pongo abelii (Sumatran orangutan).